We begin with the raw amino-acid sequence, 496 residues long: GTPase Der (496 aa).

EngA-type G domains follow at residues 3-168 and 210-383; these read PIIA…VPEK and IKLA…DCST. Residues 9–16, 56–60, 120–123, 216–223, 263–267, and 328–331 each bind GTP; these read GRPNVGKS, DTGGI, NKID, DTAGV, and NKWD. The region spanning 384-468 is the KH-like domain; that stretch reads KRINTSLLTR…PIRIQFKESE (85 aa).

Belongs to the TRAFAC class TrmE-Era-EngA-EngB-Septin-like GTPase superfamily. EngA (Der) GTPase family. In terms of assembly, associates with the 50S ribosomal subunit.

In terms of biological role, GTPase that plays an essential role in the late steps of ribosome biogenesis. The sequence is that of GTPase Der from Hamiltonella defensa subsp. Acyrthosiphon pisum (strain 5AT).